We begin with the raw amino-acid sequence, 256 residues long: Thiazole synthase (256 aa).

Lys-96 acts as the Schiff-base intermediate with DXP in catalysis. 1-deoxy-D-xylulose 5-phosphate is bound by residues Gly-157, 184–185, and 206–207; these read AG and NT.

It belongs to the ThiG family. In terms of assembly, homotetramer. Forms heterodimers with either ThiH or ThiS.

The protein resides in the cytoplasm. The enzyme catalyses [ThiS sulfur-carrier protein]-C-terminal-Gly-aminoethanethioate + 2-iminoacetate + 1-deoxy-D-xylulose 5-phosphate = [ThiS sulfur-carrier protein]-C-terminal Gly-Gly + 2-[(2R,5Z)-2-carboxy-4-methylthiazol-5(2H)-ylidene]ethyl phosphate + 2 H2O + H(+). The protein operates within cofactor biosynthesis; thiamine diphosphate biosynthesis. Its function is as follows. Catalyzes the rearrangement of 1-deoxy-D-xylulose 5-phosphate (DXP) to produce the thiazole phosphate moiety of thiamine. Sulfur is provided by the thiocarboxylate moiety of the carrier protein ThiS. In vitro, sulfur can be provided by H(2)S. This chain is Thiazole synthase, found in Brucella suis (strain ATCC 23445 / NCTC 10510).